Consider the following 74-residue polypeptide: Exodeoxyribonuclease 7 small subunit (74 aa).

This sequence belongs to the XseB family. In terms of assembly, heterooligomer composed of large and small subunits.

It localises to the cytoplasm. It carries out the reaction Exonucleolytic cleavage in either 5'- to 3'- or 3'- to 5'-direction to yield nucleoside 5'-phosphates.. Functionally, bidirectionally degrades single-stranded DNA into large acid-insoluble oligonucleotides, which are then degraded further into small acid-soluble oligonucleotides. The protein is Exodeoxyribonuclease 7 small subunit of Neisseria meningitidis serogroup A / serotype 4A (strain DSM 15465 / Z2491).